Consider the following 113-residue polypeptide: Hemerythrin (113 aa).

Positions 25, 54, 58, 73, 77, 101, and 106 each coordinate Fe cation.

The protein belongs to the hemerythrin family. Homooctamer.

Hemerythrin is a respiratory protein in blood cells of certain marine worms. The oxygen-binding site in each chain contains two iron atoms. The chain is Hemerythrin from Themiste dyscrita (Peanut worm).